The chain runs to 692 residues: Elongation factor G (692 aa).

Residues 9–284 form the tr-type G domain; it reads HMVRNIGIAA…AVVDYLPAPD (276 aa). Residues 18–25, 82–86, and 136–139 contribute to the GTP site; these read AHIDAGKT, DTPGH, and NKMD.

The protein belongs to the TRAFAC class translation factor GTPase superfamily. Classic translation factor GTPase family. EF-G/EF-2 subfamily.

The protein localises to the cytoplasm. Its function is as follows. Catalyzes the GTP-dependent ribosomal translocation step during translation elongation. During this step, the ribosome changes from the pre-translocational (PRE) to the post-translocational (POST) state as the newly formed A-site-bound peptidyl-tRNA and P-site-bound deacylated tRNA move to the P and E sites, respectively. Catalyzes the coordinated movement of the two tRNA molecules, the mRNA and conformational changes in the ribosome. This chain is Elongation factor G, found in Campylobacter curvus (strain 525.92).